Reading from the N-terminus, the 158-residue chain is Secreted RxLR effector protein 2 (158 aa).

A signal peptide spans 1–21; that stretch reads MRLLLWVLLVTLVTFLSSGDA. The RxLR-dEER motif lies at 54–75; it reads RFLRGDRSNIVNLKDGDENEER.

This sequence belongs to the RxLR effector family.

It is found in the secreted. The protein localises to the host cell. In terms of biological role, secreted effector that completely suppresses elicitor-induced cell death in host and enhances virulence of P.parasitica. The protein is Secreted RxLR effector protein 2 of Phytophthora nicotianae (Potato buckeye rot agent).